Here is a 942-residue protein sequence, read N- to C-terminus: Chitin synthase 4 (942 aa).

Residues 1 to 124 (MPPRYPFGGG…FDEHDGDVPL (124 aa)) are disordered. Basic and acidic residues predominate over residues 14–26 (DEAHHQPLERRTT). Residues 27–36 (AEAQGNSFTH) are compositionally biased toward polar residues. N604 carries an N-linked (GlcNAc...) asparagine glycan. Helical transmembrane passes span 641–661 (TIQL…FFIL), 674–694 (VPNL…FLLS), 709–729 (AMVV…YLAV), 755–775 (IVIS…MFLE), 783–803 (IVQY…YAFA), 885–905 (VLCW…ISSI), and 909–929 (TIYM…RMMG).

The protein belongs to the chitin synthase family. Class I subfamily.

Its subcellular location is the cell membrane. It localises to the cytoplasmic vesicle membrane. It carries out the reaction [(1-&gt;4)-N-acetyl-beta-D-glucosaminyl](n) + UDP-N-acetyl-alpha-D-glucosamine = [(1-&gt;4)-N-acetyl-beta-D-glucosaminyl](n+1) + UDP + H(+). Functionally, polymerizes chitin, a structural polymer of the cell wall and septum, by transferring the sugar moiety of UDP-GlcNAc to the non-reducing end of the growing chitin polymer. This chain is Chitin synthase 4, found in Mycosarcoma maydis (Corn smut fungus).